The sequence spans 24 residues: uncharacterized protein (24 aa).

This is an uncharacterized protein from Schizosaccharomyces pombe (strain 972 / ATCC 24843) (Fission yeast).